The following is a 421-amino-acid chain: MDLDSKMKKMGLGHEQGFGAPCLKCKEKCEGFELHFWRKICRNCKCGQEEHDVLLSNEEDRKVGRLFEDTKYTTLIAKLKTDGIPMYKRNVMILTNPVAAKKNVSINTVTYEWAPPVQNQALARQYMQMLPKEKQPVAGSEGAQYRKKQLAKQLPAHDQDPSKCHELSPKEVKEMEQFVKKYKSEALGVGDVKLPYEMGGPSPDKLYIPAGDRSTPAALGPMESKPAECKGTQYFCYCCKLSMKEGDPAIYAERAGYDKLWHPACFVCSTCSELLVDMIYFWKNGKLFCGRHYCDSEKPRCAGCDELIFSNEYTQAENQNWHLKHFCCFDCDNILAGEIYVMVNDKPVCKPCYVKNHAVVCQGCHNAIDPEVQRVTYNDFSWHASTQCFLCSCCSKCLIGQKFMPVEGMVFCSVECKKMMS.

The PET domain occupies 92–199 (MILTNPVAAK…GDVKLPYEMG (108 aa)). Positions 133–164 (EKQPVAGSEGAQYRKKQLAKQLPAHDQDPSKC) are disordered. The segment covering 155-164 (PAHDQDPSKC) has biased composition (basic and acidic residues). LIM zinc-binding domains are found at residues 234 to 297 (YFCY…CDSE), 299 to 359 (PRCA…NHAV), and 362 to 421 (QGCH…KMMS).

It belongs to the prickle / espinas / testin family. Interacts via LIM domain 1 with ZYX. Interacts (via LIM domain 3) with ENAH and VASP. Interacts with ALKBH4, talin, actin, alpha-actinin, GRIP1 and PXN. Interacts (via LIM domain 2) with ACTL7A (via N-terminus). Heterodimer with ACTL7A; the heterodimer interacts with ENAH to form a heterotrimer.

It localises to the cytoplasm. It is found in the cell junction. The protein resides in the focal adhesion. Scaffold protein that may play a role in cell adhesion, cell spreading and in the reorganization of the actin cytoskeleton. Plays a role in the regulation of cell proliferation. May act as a tumor suppressor. The polypeptide is Testin (TES) (Oryctolagus cuniculus (Rabbit)).